Here is a 366-residue protein sequence, read N- to C-terminus: Histidinol-phosphate aminotransferase 2 (366 aa).

The residue at position 226 (lysine 226) is an N6-(pyridoxal phosphate)lysine.

This sequence belongs to the class-II pyridoxal-phosphate-dependent aminotransferase family. Histidinol-phosphate aminotransferase subfamily. In terms of assembly, homodimer. The cofactor is pyridoxal 5'-phosphate.

It catalyses the reaction L-histidinol phosphate + 2-oxoglutarate = 3-(imidazol-4-yl)-2-oxopropyl phosphate + L-glutamate. It participates in amino-acid biosynthesis; L-histidine biosynthesis; L-histidine from 5-phospho-alpha-D-ribose 1-diphosphate: step 7/9. In Haemophilus influenzae (strain ATCC 51907 / DSM 11121 / KW20 / Rd), this protein is Histidinol-phosphate aminotransferase 2 (hisC2).